Reading from the N-terminus, the 126-residue chain is Glycine cleavage system H protein (126 aa).

Residues Ile-22–Glu-104 form the Lipoyl-binding domain. N6-lipoyllysine is present on Lys-63.

This sequence belongs to the GcvH family. In terms of assembly, the glycine cleavage system is composed of four proteins: P, T, L and H. It depends on (R)-lipoate as a cofactor.

In terms of biological role, the glycine cleavage system catalyzes the degradation of glycine. The H protein shuttles the methylamine group of glycine from the P protein to the T protein. The polypeptide is Glycine cleavage system H protein (Thermobifida fusca (strain YX)).